A 28-amino-acid chain; its full sequence is VFTHVLQPYPEIRPRFPLVGGWKTHYXV.

This sequence belongs to the OST1 family. In terms of assembly, component of the oligosaccharyltransferase (OST) complex.

The protein localises to the endoplasmic reticulum membrane. Its pathway is protein modification; protein glycosylation. Subunit of the oligosaccharyl transferase (OST) complex that catalyzes the initial transfer of a defined glycan (Glc(3)Man(9)GlcNAc(2) in eukaryotes) from the lipid carrier dolichol-pyrophosphate to an asparagine residue within an Asn-X-Ser/Thr consensus motif in nascent polypeptide chains, the first step in protein N-glycosylation. N-glycosylation occurs cotranslationally and the complex associates with the Sec61 complex at the channel-forming translocon complex that mediates protein translocation across the endoplasmic reticulum (ER). All subunits are required for a maximal enzyme activity. The sequence is that of Dolichyl-diphosphooligosaccharide--protein glycosyltransferase subunit 1 from Gallus gallus (Chicken).